The primary structure comprises 322 residues: Quinolinate synthase (322 aa).

Iminosuccinate is bound by residues H36 and S53. [4Fe-4S] cluster is bound at residue C98. Iminosuccinate contacts are provided by residues Y124–N126 and S141. C184 contributes to the [4Fe-4S] cluster binding site. Residues H210–E212 and T227 each bind iminosuccinate. A [4Fe-4S] cluster-binding site is contributed by C278.

It belongs to the quinolinate synthase family. Type 2 subfamily. [4Fe-4S] cluster serves as cofactor.

It localises to the cytoplasm. It carries out the reaction iminosuccinate + dihydroxyacetone phosphate = quinolinate + phosphate + 2 H2O + H(+). The protein operates within cofactor biosynthesis; NAD(+) biosynthesis; quinolinate from iminoaspartate: step 1/1. Functionally, catalyzes the condensation of iminoaspartate with dihydroxyacetone phosphate to form quinolinate. This Chloroherpeton thalassium (strain ATCC 35110 / GB-78) protein is Quinolinate synthase.